Consider the following 644-residue polypeptide: Biosynthetic arginine decarboxylase (644 aa).

Lysine 100 is subject to N6-(pyridoxal phosphate)lysine. 282–292 (CDVGGGLAIDY) contacts substrate.

This sequence belongs to the Orn/Lys/Arg decarboxylase class-II family. SpeA subfamily. The cofactor is Mg(2+). Pyridoxal 5'-phosphate is required as a cofactor.

The catalysed reaction is L-arginine + H(+) = agmatine + CO2. In terms of biological role, catalyzes the biosynthesis of agmatine from arginine. This is Biosynthetic arginine decarboxylase from Gloeobacter violaceus (strain ATCC 29082 / PCC 7421).